The following is a 317-amino-acid chain: Apolipoprotein E (317 aa).

Positions 1–18 (MKVLWAALLVTFLAGCQA) are cleaved as a signal peptide. A run of 8 repeats spans residues 80 to 101 (TLMDETMKELKAYKSDLEEQLS), 102 to 123 (PVAEETRARLSKELQAAQARLG), 124 to 145 (ADMEDVRSRLVQYRGEVQAMLG), 146 to 167 (QSTEELRARLASHLRKLRKRLL), 168 to 189 (RDADDLQKRLAVYQAGAREGAE), 190 to 211 (RGVSAIRERLGPLVEQGRVRAA), 212 to 233 (TVGSLAGQPLQERAQAWGERLR), and 234 to 255 (ARMEEVGSRTRDRLDEVKEQVA). Positions 80–255 (TLMDETMKEL…RLDEVKEQVA (176 aa)) are 8 X 22 AA approximate tandem repeats. Residue Met143 is modified to Methionine sulfoxide. Ser147 carries the post-translational modification Phosphoserine. The segment at 158–168 (HLRKLRKRLLR) is LDL and other lipoprotein receptors binding. Residue 162 to 165 (LRKR) coordinates heparin. Residues 210–290 (AATVGSLAGQ…SWFEPLVEDM (81 aa)) are lipid-binding and lipoprotein association. Position 229-236 (229-236 (GERLRARM)) interacts with heparin. Positions 266–317 (QQISLQAEAFQARLKSWFEPLVEDMQRQWAGLVEKVQAAVGASTAPVPSDNH) are homooligomerization. Residues 278–290 (RLKSWFEPLVEDM) form a specificity for association with VLDL region.

The protein belongs to the apolipoprotein A1/A4/E family. As to quaternary structure, homotetramer. May interact with ABCA1; functionally associated with ABCA1 in the biogenesis of HDLs. May interact with APP/A4 amyloid-beta peptide; the interaction is extremely stable in vitro but its physiological significance is unclear. May interact with MAPT. May interact with MAP2. In the cerebrospinal fluid, interacts with secreted SORL1. Interacts with PMEL; this allows the loading of PMEL luminal fragment on ILVs to induce fibril nucleation. Post-translationally, APOE exists as multiple glycosylated and sialylated glycoforms within cells and in plasma. The extent of glycosylation and sialylation are tissue and context specific. Glycated in plasma VLDL. In terms of processing, phosphorylated by FAM20C in the extracellular medium.

It is found in the secreted. The protein localises to the extracellular space. Its subcellular location is the extracellular matrix. The protein resides in the extracellular vesicle. It localises to the endosome. It is found in the multivesicular body. APOE is an apolipoprotein, a protein associating with lipid particles, that mainly functions in lipoprotein-mediated lipid transport between organs via the plasma and interstitial fluids. APOE is a core component of plasma lipoproteins and is involved in their production, conversion and clearance. Apolipoproteins are amphipathic molecules that interact both with lipids of the lipoprotein particle core and the aqueous environment of the plasma. As such, APOE associates with chylomicrons, chylomicron remnants, very low density lipoproteins (VLDL) and intermediate density lipoproteins (IDL) but shows a preferential binding to high-density lipoproteins (HDL). It also binds a wide range of cellular receptors including the LDL receptor/LDLR, the LDL receptor-related proteins LRP1, LRP2 and LRP8 and the very low-density lipoprotein receptor/VLDLR that mediate the cellular uptake of the APOE-containing lipoprotein particles. Finally, APOE also has a heparin-binding activity and binds heparan-sulfate proteoglycans on the surface of cells, a property that supports the capture and the receptor-mediated uptake of APOE-containing lipoproteins by cells. A main function of APOE is to mediate lipoprotein clearance through the uptake of chylomicrons, VLDLs, and HDLs by hepatocytes. APOE is also involved in the biosynthesis by the liver of VLDLs as well as their uptake by peripheral tissues ensuring the delivery of triglycerides and energy storage in muscle, heart and adipose tissues. By participating in the lipoprotein-mediated distribution of lipids among tissues, APOE plays a critical role in plasma and tissues lipid homeostasis. APOE is also involved in two steps of reverse cholesterol transport, the HDLs-mediated transport of cholesterol from peripheral tissues to the liver, and thereby plays an important role in cholesterol homeostasis. First, it is functionally associated with ABCA1 in the biogenesis of HDLs in tissues. Second, it is enriched in circulating HDLs and mediates their uptake by hepatocytes. APOE also plays an important role in lipid transport in the central nervous system, regulating neuron survival and sprouting. The chain is Apolipoprotein E (APOE) from Colobus guereza (Mantled guereza).